The sequence spans 651 residues: Forkhead box protein K2 (651 aa).

The span at 1–13 (MAAAAALSGAGAP) shows a compositional bias: low complexity. The segment at 1–29 (MAAAAALSGAGAPPAGGGAGGGGSPPGGW) is disordered. A compositionally biased stretch (gly residues) spans 14–26 (PAGGGAGGGGSPP). A Phosphoserine modification is found at S24. The FHA domain maps to 48–119 (VTIGRNSSQG…NGVFVDGVFQ (72 aa)). The required for interaction with DVL2 and SUDS3 stretch occupies residues 120-162 (RRGAPPLQLPRVCTFRFPSTNIKITFTALSSEKREKQEAPESP). At R135 the chain carries Omega-N-methylarginine. 2 disordered regions span residues 150-171 (SEKREKQEAPESPVKPVQPHIS) and 194-251 (TISA…SKPP). Glycyl lysine isopeptide (Lys-Gly) (interchain with G-Cter in SUMO2) cross-links involve residues K152 and K155. Over residues 194 to 203 (TISAANSCPS) the composition is skewed to polar residues. S230 is subject to Phosphoserine. A compositionally biased stretch (basic and acidic residues) spans 233 to 249 (ENEKEASGGDSPKDDSK). Residues 249–344 (KPPYSYAQLI…EQAFRKRRPR (96 aa)) constitute a DNA-binding region (fork-head). Positions 291-309 (KGWQNSIRHNLSLNRYFIK) are DNA-binding; major groove. L301, S302, N304, and F307 together coordinate Mg(2+). 2 DNA-binding; minor groove regions span residues 319-323 (KGSFW) and 339-344 (RKRRPR). Positions 350–399 (RTPLGPLSSRSAPASPNHAGVLSAHSSGAQTPESLSREGSPAPLEPEPGA) are disordered. Position 364 is a phosphoserine (S364). The segment covering 373-383 (AHSSGAQTPES) has biased composition (polar residues). A phosphoserine mark is found at S389, S415, and S419. K518 is covalently cross-linked (Glycyl lysine isopeptide (Lys-Gly) (interchain with G-Cter in SUMO2)). Position 590 is a phosphoserine (S590). Polar residues predominate over residues 601–614 (ASASLPTKRQNGDQ). Residues 601-623 (ASASLPTKRQNGDQAEQPELKRV) are disordered. Residue K624 forms a Glycyl lysine isopeptide (Lys-Gly) (interchain with G-Cter in SUMO2) linkage.

As to quaternary structure, component of SIN3A-, but not SIN3B-, containing multiprotein complexes. Interacts with DVL1, DVL2 (when phosphorylated) and DVL3; the interaction induces DVL2 nuclear translocation. Interacts with SUDS3. Interacts with BAP1 (when phosphorylated); leading to recruit the PR-DUB complex and repress FOXK2 target genes. Accessory component of the polycomb repressive deubiquitinase (PR-DUB) complex, at least composed of BAP1, one of ASXL1, ASXL2 or (probably) ASXL3 and one of MBD5 or MBD6. The PR-DUB core associates with a number of accessory proteins, including FOXK1, FOXK2, KDM1B, HCFC1 and OGT. Hyperphosphorylated during mitosis by CDK1 and, to a lower extent, CDK2. Phosphorylation at Ser-364 and Ser-419 affects stability by promoting degradation. In terms of tissue distribution, expressed in a wide range of adult brain regions, namely the piriform cortex, the major islands of Calleja and cells lining the lateral ventricles, the bed nucleus of stria terminalis, the paraventricular thalamic nucleus, habenula and all structures of the hippocampus. Also present in the hypothalamus, cerebral cortex and in the Purkinje cell layer in the cerebellum. Additionally expressed in dopamine neurons of the substantia and more sparsely in the ventral tegmental area.

It is found in the nucleus. The protein localises to the cytoplasm. Transcriptional regulator involved in different processes such as glucose metabolism, aerobic glycolysis and autophagy. Recognizes and binds the forkhead DNA sequence motif (5'-GTAAACA-3') and can both act as a transcription activator or repressor, depending on the context. Together with FOXK1, acts as a key regulator of metabolic reprogramming towards aerobic glycolysis, a process in which glucose is converted to lactate in the presence of oxygen. Acts by promoting expression of enzymes for glycolysis (such as hexokinase-2 (HK2), phosphofructokinase, pyruvate kinase (PKLR) and lactate dehydrogenase), while suppressing further oxidation of pyruvate in the mitochondria by up-regulating pyruvate dehydrogenase kinases PDK1 and PDK4. Probably plays a role in gluconeogenesis during overnight fasting, when lactate from white adipose tissue and muscle is the main substrate. Together with FOXK1, acts as a negative regulator of autophagy in skeletal muscle: in response to starvation, enters the nucleus, binds the promoters of autophagy genes and represses their expression, preventing proteolysis of skeletal muscle proteins. In addition to the 5'-GTAAACA-3' DNA motif, also binds the 5'-TGANTCA-3' palindromic DNA motif, and co-associates with JUN/AP-1 to activate transcription. Also able to bind to a minimal DNA heteroduplex containing a G/T-mismatch with 5'-TRT[G/T]NB-3' sequence. Binds to NFAT-like motifs (purine-rich) in the IL2 promoter. Positively regulates WNT/beta-catenin signaling by translocating DVL proteins into the nucleus. Accessory component of the polycomb repressive deubiquitinase (PR-DUB) complex; recruits the PR-DUB complex to specific FOXK2-bound genes. The protein is Forkhead box protein K2 of Mus musculus (Mouse).